The following is an 810-amino-acid chain: LPS-assembly protein LptD (810 aa).

The signal sequence occupies residues 1–29; sequence MTKWTLGYSYPIALTISLIPALTPAIVQA.

It belongs to the LptD family. As to quaternary structure, component of the lipopolysaccharide transport and assembly complex. Interacts with LptE and LptA.

The protein localises to the cell outer membrane. Its function is as follows. Together with LptE, is involved in the assembly of lipopolysaccharide (LPS) at the surface of the outer membrane. This chain is LPS-assembly protein LptD, found in Aeromonas salmonicida (strain A449).